The following is a 294-amino-acid chain: N-acetylmuramic acid 6-phosphate etherase (294 aa).

The region spanning 56–219 is the SIS domain; it reads TSYSLRNGGR…STLSMVSVGK (164 aa). Glu-84 functions as the Proton donor in the catalytic mechanism. The active site involves Glu-115.

This sequence belongs to the GCKR-like family. MurNAc-6-P etherase subfamily. Homodimer.

It catalyses the reaction N-acetyl-D-muramate 6-phosphate + H2O = N-acetyl-D-glucosamine 6-phosphate + (R)-lactate. It participates in amino-sugar metabolism; 1,6-anhydro-N-acetylmuramate degradation. It functions in the pathway amino-sugar metabolism; N-acetylmuramate degradation. The protein operates within cell wall biogenesis; peptidoglycan recycling. Functionally, specifically catalyzes the cleavage of the D-lactyl ether substituent of MurNAc 6-phosphate, producing GlcNAc 6-phosphate and D-lactate. Together with AnmK, is also required for the utilization of anhydro-N-acetylmuramic acid (anhMurNAc) either imported from the medium or derived from its own cell wall murein, and thus plays a role in cell wall recycling. This Francisella tularensis subsp. holarctica (strain LVS) protein is N-acetylmuramic acid 6-phosphate etherase.